The following is a 220-amino-acid chain: UPF0502 protein VVA1225 (220 aa).

This sequence belongs to the UPF0502 family.

This is UPF0502 protein VVA1225 from Vibrio vulnificus (strain YJ016).